Reading from the N-terminus, the 370-residue chain is Fe(2+) transport protein 2 (370 aa).

The signal sequence occupies residues 1–25 (MMMSSSQTPVRIAFVFLVILAATDA). Over 26 to 55 (HSDHRTPPPACGGAAVGGECHSVARALRLK) the chain is Extracellular. Residues 56 to 76 (LIAIPAILAASVAGVCLPLFA) form a helical membrane-spanning segment. The Cytoplasmic segment spans residues 77–85 (RSVPALRPD). The helical transmembrane segment at 86–106 (GGLFAVVKAFASGVILGTGYM) threads the bilayer. Topologically, residues 107–130 (HVLPDSFNDLTSPCLPRKPWSEFP) are extracellular. The helical transmembrane segment at 131-151 (FAAFVAMLAAVFTLMVDSLML) threads the bilayer. Topologically, residues 152 to 215 (TFHTRGSKGR…TTKAQLLRNR (64 aa)) are cytoplasmic. Residues 216–236 (VIVQVLEMGIVVHSVVIGLGM) traverse the membrane as a helical segment. Topologically, residues 237 to 247 (GASQNVCTIRP) are extracellular. Residues 248–268 (LVAALCFHQMFEGMGLGGCIL) traverse the membrane as a helical segment. Topologically, residues 269–278 (QAGYGGRTRS) are cytoplasmic. A helical membrane pass occupies residues 279–299 (ALVFFFSTTTPFGIALGLALT). Residues 300–309 (RVYSDSSPTA) are Extracellular-facing. Residues 310-330 (LVVVGLLNAASAGLLHYMALV) traverse the membrane as a helical segment. Residues 331-349 (ELLAADFMGPKLQGNVRLQ) lie on the Cytoplasmic side of the membrane. Residues 350 to 370 (LAASLAILLGAGGMSVMAKWA) traverse the membrane as a helical segment.

It belongs to the ZIP transporter (TC 2.A.5) family.

It is found in the cell membrane. Functionally, iron transporter that may play a role in the uptake of iron from the rhizosphere across the plasma membrane in the root epidermal layer. The protein is Fe(2+) transport protein 2 (IRT2) of Oryza sativa subsp. japonica (Rice).